The chain runs to 312 residues: Aspartate carbamoyltransferase catalytic subunit (312 aa).

The carbamoyl phosphate site is built by Arg-55 and Thr-56. Position 83 (Lys-83) interacts with L-aspartate. Positions 105, 133, and 136 each coordinate carbamoyl phosphate. Positions 166 and 220 each coordinate L-aspartate. Positions 261 and 262 each coordinate carbamoyl phosphate.

It belongs to the aspartate/ornithine carbamoyltransferase superfamily. ATCase family. In terms of assembly, heterododecamer (2C3:3R2) of six catalytic PyrB chains organized as two trimers (C3), and six regulatory PyrI chains organized as three dimers (R2).

It carries out the reaction carbamoyl phosphate + L-aspartate = N-carbamoyl-L-aspartate + phosphate + H(+). Its pathway is pyrimidine metabolism; UMP biosynthesis via de novo pathway; (S)-dihydroorotate from bicarbonate: step 2/3. Its function is as follows. Catalyzes the condensation of carbamoyl phosphate and aspartate to form carbamoyl aspartate and inorganic phosphate, the committed step in the de novo pyrimidine nucleotide biosynthesis pathway. In Prosthecochloris aestuarii (strain DSM 271 / SK 413), this protein is Aspartate carbamoyltransferase catalytic subunit.